A 403-amino-acid polypeptide reads, in one-letter code: Protein-export membrane protein SecD (403 aa).

The next 6 membrane-spanning stretches (helical) occupy residues 13–33 (LLVITAVWIVAATSLAVKGVN), 245–265 (FLKMAMIAGAIAFAAVSVIIA), 285–305 (VVFLIGLASLTGFTIDLPALA), 306–326 (GIILSIGSGVDDLIVITDEIV), 347–367 (VVLASFATLAAAMAVLFVAGM), and 368–388 (GLLKGFAIMTIAGAFYGVVIT).

This sequence belongs to the SecD/SecF family. SecD subfamily. In terms of assembly, part of the protein translocation apparatus. Forms a complex with SecF.

It localises to the cell membrane. Functionally, involved in protein export. The protein is Protein-export membrane protein SecD of Methanopyrus kandleri (strain AV19 / DSM 6324 / JCM 9639 / NBRC 100938).